Reading from the N-terminus, the 294-residue chain is MTNSNKVLKLGLPKGSLQDSTLDLFAHAGFHFSVQSRSYFPSIDDDELEAILIRAQEMAHYVQLGAFDVGLTGKDWIIETDADVVEVADLVYSKASMRPVRWVLAVPESSPVKTVKDLEGKHIATEVVNITKKYLAANGVNASVEFSWGATEVKPPDLADAIVEVTETGSSLRANKLRIVETILESNTKLIANRQSWEDPWKREKIESMALLLQGAINAQGKVGLKMNAPKSALEKITSIIPALRQPTVSHLANDQWVALEVIVTEKIVRKLIPELKRAGAEGIFEYDINKLID.

The protein belongs to the ATP phosphoribosyltransferase family. Long subfamily. It depends on Mg(2+) as a cofactor.

The protein localises to the cytoplasm. It catalyses the reaction 1-(5-phospho-beta-D-ribosyl)-ATP + diphosphate = 5-phospho-alpha-D-ribose 1-diphosphate + ATP. It functions in the pathway amino-acid biosynthesis; L-histidine biosynthesis; L-histidine from 5-phospho-alpha-D-ribose 1-diphosphate: step 1/9. Feedback inhibited by histidine. In terms of biological role, catalyzes the condensation of ATP and 5-phosphoribose 1-diphosphate to form N'-(5'-phosphoribosyl)-ATP (PR-ATP). Has a crucial role in the pathway because the rate of histidine biosynthesis seems to be controlled primarily by regulation of HisG enzymatic activity. The protein is ATP phosphoribosyltransferase of Chlorobium luteolum (strain DSM 273 / BCRC 81028 / 2530) (Pelodictyon luteolum).